The following is a 99-amino-acid chain: NADH-quinone oxidoreductase subunit K (99 aa).

The next 3 membrane-spanning stretches (helical) occupy residues 3-23 (PDNYLYLSALLFTIGAAGVLL), 28-48 (IVMFMCVELMLNAGNLAFVTF), and 59-79 (VVAFFTMVVAACEVVIGLAII).

Belongs to the complex I subunit 4L family. NDH-1 is composed of 14 different subunits. Subunits NuoA, H, J, K, L, M, N constitute the membrane sector of the complex.

The protein localises to the cell membrane. It catalyses the reaction a quinone + NADH + 5 H(+)(in) = a quinol + NAD(+) + 4 H(+)(out). In terms of biological role, NDH-1 shuttles electrons from NADH, via FMN and iron-sulfur (Fe-S) centers, to quinones in the respiratory chain. The immediate electron acceptor for the enzyme in this species is believed to be a menaquinone. Couples the redox reaction to proton translocation (for every two electrons transferred, four hydrogen ions are translocated across the cytoplasmic membrane), and thus conserves the redox energy in a proton gradient. This chain is NADH-quinone oxidoreductase subunit K, found in Mycolicibacterium gilvum (strain PYR-GCK) (Mycobacterium gilvum (strain PYR-GCK)).